We begin with the raw amino-acid sequence, 361 residues long: MNLVICVLLLSIWKNNCMTTNQTNGSSTTGDKPVESMQTKLNYLRRNLLILVGIIIMVFVFICFCYLHYNCLSDDASKAGMVKKKGIAAKSSKTSFSEAKTASQCSPETQPMLSTADKSSDSSSPERASAQSSTEKLIRPSSLQKPSIPNSAGKLTRPSYPKRSSKSSCSKKLSKSSHLEKAHKKGSLEKLCKLDYACKLASSDKPVRPPQLFKPLYSSHPQNEISPSKPFGPQELAKPPKHFNPKRSVSLGRAALLSNSELAETCQPYKKKHLVAKTYRPLVNDISEAKEKNTQNLHVSSKVKSSSRSFRKLDSRNNAYGDHVNDSDTMKYYSEVDSDKVIIITCDRGYNQVTSEVTLND.

The signal sequence occupies residues 1–19; it reads MNLVICVLLLSIWKNNCMT. The Extracellular segment spans residues 20 to 47; that stretch reads TNQTNGSSTTGDKPVESMQTKLNYLRRN. N-linked (GlcNAc...) asparagine glycosylation is present at asparagine 24. A helical membrane pass occupies residues 48–68; that stretch reads LLILVGIIIMVFVFICFCYLH. Residues 69-361 lie on the Cytoplasmic side of the membrane; it reads YNCLSDDASK…QVTSEVTLND (293 aa). A compositionally biased stretch (polar residues) spans 99-113; it reads AKTASQCSPETQPML. 3 disordered regions span residues 99–184, 209–247, and 295–316; these read AKTA…KAHK, PPQLFKPLYSSHPQNEISPSKPFGPQELAKPPKHFNPKR, and QNLHVSSKVKSSSRSFRKLDSR. A compositionally biased stretch (low complexity) spans 114 to 133; it reads STADKSSDSSSPERASAQSS. Positions 141 to 150 are enriched in polar residues; that stretch reads SSLQKPSIPN. Residues 299-308 are compositionally biased toward low complexity; the sequence is VSSKVKSSSR.

It localises to the membrane. This is an uncharacterized protein from Homo sapiens (Human).